Here is a 295-residue protein sequence, read N- to C-terminus: Protoheme IX farnesyltransferase 2 (295 aa).

9 consecutive transmembrane segments (helical) span residues I9 to A29, F36 to F56, L83 to V103, L108 to L128, G135 to S155, V163 to F183, I209 to A229, G230 to G250, and V264 to Q284.

This sequence belongs to the UbiA prenyltransferase family. Protoheme IX farnesyltransferase subfamily.

Its subcellular location is the cell inner membrane. It carries out the reaction heme b + (2E,6E)-farnesyl diphosphate + H2O = Fe(II)-heme o + diphosphate. Its pathway is porphyrin-containing compound metabolism; heme O biosynthesis; heme O from protoheme: step 1/1. Its function is as follows. Converts heme B (protoheme IX) to heme O by substitution of the vinyl group on carbon 2 of heme B porphyrin ring with a hydroxyethyl farnesyl side group. This Pseudomonas entomophila (strain L48) protein is Protoheme IX farnesyltransferase 2.